The chain runs to 1722 residues: Signal-induced proliferation-associated 1-like protein 2 (1722 aa).

2 disordered regions span residues 1–29 and 44–72; these read MSDPRPSQAEKHKLGRAAAKLKDPSRTMQ and SMGPATLNTSSSSEGGGGGGGPANGTPAV. A compositionally biased stretch (gly residues) spans 57 to 66; the sequence is EGGGGGGGPA. Phosphoserine occurs at positions 149, 380, and 384. The tract at residues 362–405 is disordered; that stretch reads ASAASQTPVPVGPAGGCESPLGSKEDLNSKENPDADEGDGKSND. The span at 384–403 shows a compositional bias: basic and acidic residues; that stretch reads SKEDLNSKENPDADEGDGKS. Positions 596–813 constitute a Rap-GAP domain; the sequence is LLKLDEQGLS…RTRQEYLKDL (218 aa). In terms of domain architecture, PDZ spans 951–1027; it reads EMTLRRNGLG…VKVVIIQPHE (77 aa). Position 1030 is a phosphoserine (serine 1030). Disordered regions lie at residues 1068–1246 and 1331–1360; these read HRVP…FGSG and GSMGDLSEVSSHSSGSQHSGSPSAHCSKST. Composition is skewed to low complexity over residues 1091–1103 and 1120–1131; these read LQCQPLLQQAQAA and SSPSNQSSSSDP. Basic and acidic residues predominate over residues 1195 to 1218; the sequence is YKERVLQKDGSCKESPNKLSHIGD. The span at 1220 to 1237 shows a compositional bias: low complexity; it reads SCSSHSSSNTLSSNTSSN. Position 1245 is a phosphoserine (serine 1245). Positions 1331–1355 are enriched in low complexity; that stretch reads GSMGDLSEVSSHSSGSQHSGSPSAH. Residues serine 1461, serine 1472, serine 1478, serine 1488, serine 1549, serine 1552, and serine 1591 each carry the phosphoserine modification. Residues 1652–1712 are a coiled coil; that stretch reads STLTGKVNQL…ATAQLRKFTE (61 aa).

The polypeptide is Signal-induced proliferation-associated 1-like protein 2 (Sipa1l2) (Mus musculus (Mouse)).